A 611-amino-acid polypeptide reads, in one-letter code: Chaperone protein DnaK (611 aa).

Residue T173 is modified to Phosphothreonine; by autocatalysis. The segment covering 577–591 (AAAAQAAQGGEADAG) has biased composition (low complexity). Residues 577-611 (AAAAQAAQGGEADAGAGKKDDGVVDADFEEVKDDK) are disordered. Positions 599 to 611 (VVDADFEEVKDDK) are enriched in acidic residues.

It belongs to the heat shock protein 70 family.

In terms of biological role, acts as a chaperone. The chain is Chaperone protein DnaK from Lysinibacillus sphaericus (strain C3-41).